A 20-amino-acid chain; its full sequence is VIGGDECNINEHPFLVLVYY.

In terms of domain architecture, Peptidase S1 spans 1–20; that stretch reads VIGGDECNINEHPFLVLVYY.

The protein belongs to the peptidase S1 family. Snake venom subfamily. In terms of assembly, monomer. Expressed by the venom gland.

It is found in the secreted. Inhibited by PMSF and soybean trypsin inhibitor. Partially inhibited by DTT and cysteine. Not affected by EDTA. Its function is as follows. Fibrin(ogen)olytic serine protease degrades Bbeta-chain of human fibrinogen (FGB) and shows a lower activity on Aa-chain (FGA). Also degrades fibrin directly. Releases fibrinopeptide B and a small amount of fibrinopeptide A. Has also be shown to catalyze the hydrolysis of some chromogenic substrates such as S2238, S2160, S2302 and S2251. This is Beta-fibrinogenase jerdofibrase from Protobothrops jerdonii (Jerdon's pitviper).